The chain runs to 668 residues: Probable potassium transport system protein Kup (668 aa).

The next 12 membrane-spanning stretches (helical) occupy residues 17 to 37 (GILV…LYVM), 59 to 79 (VSLI…VIAL), 104 to 124 (IIPA…TPAV), 148 to 168 (TIIV…QRFG), 175 to 195 (AFGP…LMNF), 221 to 241 (LGLF…ALYS), 256 to 276 (PYIK…LLTV), 299 to 319 (ILVF…QALI), 350 to 370 (MYIP…VLAF), 380 to 400 (YGLS…FYLL), 403 to 423 (IPAW…VVFF), and 430 to 450 (FFHG…IMII).

It belongs to the HAK/KUP transporter (TC 2.A.72) family.

The protein resides in the cell membrane. It catalyses the reaction K(+)(in) + H(+)(in) = K(+)(out) + H(+)(out). Functionally, transport of potassium into the cell. Likely operates as a K(+):H(+) symporter. This is Probable potassium transport system protein Kup from Enterococcus faecalis (strain ATCC 700802 / V583).